The following is a 95-amino-acid chain: Protein TusB (95 aa).

Belongs to the DsrH/TusB family. As to quaternary structure, heterohexamer, formed by a dimer of trimers. The hexameric TusBCD complex contains 2 copies each of TusB, TusC and TusD. The TusBCD complex interacts with TusE.

The protein resides in the cytoplasm. Its function is as follows. Part of a sulfur-relay system required for 2-thiolation of 5-methylaminomethyl-2-thiouridine (mnm(5)s(2)U) at tRNA wobble positions. The protein is Protein TusB of Shigella sonnei (strain Ss046).